A 525-amino-acid polypeptide reads, in one-letter code: GMP synthase [glutamine-hydrolyzing] (525 aa).

Residues 9–207 (RILILDFGSQ…VRDICQCEAL (199 aa)) enclose the Glutamine amidotransferase type-1 domain. Residue cysteine 86 is the Nucleophile of the active site. Catalysis depends on residues histidine 181 and glutamate 183. In terms of domain architecture, GMPS ATP-PPase spans 208 to 400 (WTPAKIIDDA…LGLPYDMLYR (193 aa)). 235 to 241 (SGGVDSS) contacts ATP.

In terms of assembly, homodimer.

The enzyme catalyses XMP + L-glutamine + ATP + H2O = GMP + L-glutamate + AMP + diphosphate + 2 H(+). The protein operates within purine metabolism; GMP biosynthesis; GMP from XMP (L-Gln route): step 1/1. Its function is as follows. Catalyzes the synthesis of GMP from XMP. The sequence is that of GMP synthase [glutamine-hydrolyzing] from Salmonella newport (strain SL254).